The primary structure comprises 673 residues: DNA ligase (673 aa).

NAD(+)-binding positions include 32–36 (DHVYD), 81–82 (SL), and glutamate 111. Lysine 113 (N6-AMP-lysine intermediate) is an active-site residue. The NAD(+) site is built by arginine 134, glutamate 171, lysine 286, and lysine 310. Zn(2+)-binding residues include cysteine 404, cysteine 407, cysteine 422, and cysteine 428. Positions 595 to 673 (NIIDEYKNKT…NEFWKKDNNF (79 aa)) constitute a BRCT domain.

It belongs to the NAD-dependent DNA ligase family. LigA subfamily. Mg(2+) is required as a cofactor. It depends on Mn(2+) as a cofactor.

It carries out the reaction NAD(+) + (deoxyribonucleotide)n-3'-hydroxyl + 5'-phospho-(deoxyribonucleotide)m = (deoxyribonucleotide)n+m + AMP + beta-nicotinamide D-nucleotide.. DNA ligase that catalyzes the formation of phosphodiester linkages between 5'-phosphoryl and 3'-hydroxyl groups in double-stranded DNA using NAD as a coenzyme and as the energy source for the reaction. It is essential for DNA replication and repair of damaged DNA. The protein is DNA ligase of Ureaplasma urealyticum serovar 10 (strain ATCC 33699 / Western).